Reading from the N-terminus, the 313-residue chain is UDP-N-acetylenolpyruvoylglucosamine reductase (313 aa).

The 177-residue stretch at 31 to 207 folds into the FAD-binding PCMH-type domain; that stretch reads VGGPADALVA…TGVDLGLGFD (177 aa). Residue Arg180 is part of the active site. The active-site Proton donor is Cys236. Glu307 is a catalytic residue.

It belongs to the MurB family. FAD serves as cofactor.

The protein resides in the cytoplasm. The catalysed reaction is UDP-N-acetyl-alpha-D-muramate + NADP(+) = UDP-N-acetyl-3-O-(1-carboxyvinyl)-alpha-D-glucosamine + NADPH + H(+). Its pathway is cell wall biogenesis; peptidoglycan biosynthesis. Its function is as follows. Cell wall formation. The sequence is that of UDP-N-acetylenolpyruvoylglucosamine reductase from Desulfosudis oleivorans (strain DSM 6200 / JCM 39069 / Hxd3) (Desulfococcus oleovorans).